The following is a 156-amino-acid chain: ATP synthase subunit b (156 aa).

A helical membrane pass occupies residues 7 to 29 (LFAQMVVFLVLAWFTMKFVWPPL).

The protein belongs to the ATPase B chain family. As to quaternary structure, F-type ATPases have 2 components, F(1) - the catalytic core - and F(0) - the membrane proton channel. F(1) has five subunits: alpha(3), beta(3), gamma(1), delta(1), epsilon(1). F(0) has three main subunits: a(1), b(2) and c(10-14). The alpha and beta chains form an alternating ring which encloses part of the gamma chain. F(1) is attached to F(0) by a central stalk formed by the gamma and epsilon chains, while a peripheral stalk is formed by the delta and b chains.

It is found in the cell inner membrane. In terms of biological role, f(1)F(0) ATP synthase produces ATP from ADP in the presence of a proton or sodium gradient. F-type ATPases consist of two structural domains, F(1) containing the extramembraneous catalytic core and F(0) containing the membrane proton channel, linked together by a central stalk and a peripheral stalk. During catalysis, ATP synthesis in the catalytic domain of F(1) is coupled via a rotary mechanism of the central stalk subunits to proton translocation. Its function is as follows. Component of the F(0) channel, it forms part of the peripheral stalk, linking F(1) to F(0). The polypeptide is ATP synthase subunit b (Burkholderia cenocepacia (strain ATCC BAA-245 / DSM 16553 / LMG 16656 / NCTC 13227 / J2315 / CF5610) (Burkholderia cepacia (strain J2315))).